Here is a 483-residue protein sequence, read N- to C-terminus: Glutamyl-tRNA(Gln) amidotransferase subunit A (483 aa).

Residues Lys-76 and Ser-151 each act as charge relay system in the active site. Residue Ser-175 is the Acyl-ester intermediate of the active site.

It belongs to the amidase family. GatA subfamily. In terms of assembly, heterotrimer of A, B and C subunits.

The catalysed reaction is L-glutamyl-tRNA(Gln) + L-glutamine + ATP + H2O = L-glutaminyl-tRNA(Gln) + L-glutamate + ADP + phosphate + H(+). In terms of biological role, allows the formation of correctly charged Gln-tRNA(Gln) through the transamidation of misacylated Glu-tRNA(Gln) in organisms which lack glutaminyl-tRNA synthetase. The reaction takes place in the presence of glutamine and ATP through an activated gamma-phospho-Glu-tRNA(Gln). This chain is Glutamyl-tRNA(Gln) amidotransferase subunit A, found in Pseudomonas syringae pv. syringae (strain B728a).